Here is a 188-residue protein sequence, read N- to C-terminus: Threonylcarbamoyl-AMP synthase (188 aa).

Positions 3–188 (QLHPSEIKDI…RSGKILRNGQ (186 aa)) constitute a YrdC-like domain.

Belongs to the SUA5 family. TsaC subfamily.

The protein localises to the cytoplasm. The catalysed reaction is L-threonine + hydrogencarbonate + ATP = L-threonylcarbamoyladenylate + diphosphate + H2O. Functionally, required for the formation of a threonylcarbamoyl group on adenosine at position 37 (t(6)A37) in tRNAs that read codons beginning with adenine. Catalyzes the conversion of L-threonine, HCO(3)(-)/CO(2) and ATP to give threonylcarbamoyl-AMP (TC-AMP) as the acyladenylate intermediate, with the release of diphosphate. In Shewanella sp. (strain MR-4), this protein is Threonylcarbamoyl-AMP synthase.